Reading from the N-terminus, the 999-residue chain is Translation initiation factor IF-2 (999 aa).

Residues 50 to 407 (AFVNNTGSPA…RGQGQTVRLS (358 aa)) form a disordered region. 2 stretches are compositionally biased toward pro residues: residues 60–89 (PAAP…PPGG) and 96–121 (PMPP…PPQS). Over residues 136–162 (VAAAEARAAALKAEQEAAVKAAQAARQ) the composition is skewed to low complexity. Positions 163–173 (QQRDNVRREPP) are enriched in basic and acidic residues. Positions 179–194 (RPGPRPGPGAMPPRPG) are enriched in pro residues. Low complexity predominate over residues 213–222 (GGRPPARGAG). Residues 244–266 (RPSPASMPPRPSPASMPPRPSPA) are compositionally biased toward pro residues. Residues 275–367 (RPGGPGSGRP…GAAGAFGRPG (93 aa)) are compositionally biased toward gly residues. Basic residues predominate over residues 371-380 (TRGRKSKKQR). Polar residues predominate over residues 388–405 (SAPTMSSGAPRGQGQTVR). Positions 490–662 (SRPPVVTVMG…VLLTADASLE (173 aa)) constitute a tr-type G domain. The segment at 499-506 (GHVDHGKT) is G1. Residue 499-506 (GHVDHGKT) participates in GTP binding. Positions 524 to 528 (GITQH) are G2. Residues 549-552 (DTPG) are G3. GTP contacts are provided by residues 549–553 (DTPGH) and 603–606 (NKID). The segment at 603–606 (NKID) is G4. Residues 639–641 (AAK) form a G5 region.

It belongs to the TRAFAC class translation factor GTPase superfamily. Classic translation factor GTPase family. IF-2 subfamily.

The protein localises to the cytoplasm. One of the essential components for the initiation of protein synthesis. Protects formylmethionyl-tRNA from spontaneous hydrolysis and promotes its binding to the 30S ribosomal subunits. Also involved in the hydrolysis of GTP during the formation of the 70S ribosomal complex. This is Translation initiation factor IF-2 from Salinispora tropica (strain ATCC BAA-916 / DSM 44818 / JCM 13857 / NBRC 105044 / CNB-440).